We begin with the raw amino-acid sequence, 303 residues long: Vacuolar protein sorting-associated protein 26B (303 aa).

It belongs to the VPS26 family. In terms of assembly, component of the retromer complex which consists of VPS29 (MAG1), VPS26 (VPS26A or VPS26B), VPS35 (VPS35A or VPS35B or VPS35C), VPS5/17 (SNX1 or SNX2A or SNX2B). Component of a retromer subcomplex consisting of VPS29 (MAG1), VPS26 (VPS26A or VPS26B), VPS35 (VPS35A or VPS35B or VPS35C).

The protein localises to the cytoplasm. The protein resides in the endosome membrane. It is found in the prevacuolar compartment membrane. Its subcellular location is the golgi apparatus. It localises to the trans-Golgi network membrane. Plays a role in vesicular protein sorting. Component of the membrane-associated retromer complex which is essential in endosome-to-Golgi retrograde transport. The VPS29-VPS26-VPS35 subcomplex may be involved in recycling of specific cargos from endosome to the plasma membrane. The chain is Vacuolar protein sorting-associated protein 26B (VPS26B) from Arabidopsis thaliana (Mouse-ear cress).